The chain runs to 357 residues: Homoserine kinase (357 aa).

Belongs to the GHMP kinase family. Homoserine kinase subfamily. In terms of assembly, homodimer.

It carries out the reaction L-homoserine + ATP = O-phospho-L-homoserine + ADP + H(+). The protein operates within amino-acid biosynthesis; L-threonine biosynthesis; L-threonine from L-aspartate: step 4/5. Functionally, commits homoserine to the threonine biosynthesis pathway by catalyzing its O-phosphorylation. The sequence is that of Homoserine kinase (THR1) from Candida albicans (strain SC5314 / ATCC MYA-2876) (Yeast).